The chain runs to 484 residues: uncharacterized protein (484 aa).

A run of 12 helical transmembrane segments spans residues 19 to 39 (LSFG…MIFV), 78 to 98 (VNWG…WLIV), 110 to 130 (LFFM…GFII), 134 to 154 (IFAI…SNYL), 165 to 185 (FSPF…AGII), 199 to 219 (IVFL…IILG), 249 to 269 (TWYW…PFTF), 289 to 309 (ISVF…TIGL), 321 to 341 (ISTI…VFVL), 360 to 380 (LFLF…GVML), 398 to 418 (FGLI…ITSL), and 440 to 460 (LGAY…LALL).

The protein localises to the cell membrane. This is an uncharacterized protein from Mesomycoplasma hyopneumoniae (strain J / ATCC 25934 / NCTC 10110) (Mycoplasma hyopneumoniae).